The sequence spans 395 residues: Teichoic acid D-alanyltransferase (395 aa).

The Extracellular segment spans residues 1 to 6; it reads MTPYSS. Residues 7-26 traverse the membrane as a helical segment; that stretch reads FLFFILLGILLLPTIILGLN. Residues 27–30 are Cytoplasmic-facing; it reads GKRF. Residues 31–46 form a helical membrane-spanning segment; sequence QAYNMFISIIILALIF. The Extracellular portion of the chain corresponds to 47-50; sequence SHDL. Residues 51–76 traverse the membrane as a helical segment; it reads HGVIALCLFTIWQVLLISGYLAYRQK. Topologically, residues 77-79 are cytoplasmic; that stretch reads ANS. A helical membrane pass occupies residues 80–104; sequence GFVFCGAVIASILPLFLSKIWPFLS. The Extracellular segment spans residues 105–120; the sequence is HPQPHHPPHNLISFLG. Residues 121 to 137 traverse the membrane as a helical segment; that stretch reads ISYLTFKGVQLIMEARD. Over 138–145 the chain is Cytoplasmic; it reads GLLKEQLP. An intramembrane segment occupies 146–175; it reads LHRLLYFILFFPTISSGPIDRYRRFVKDEQ. Topologically, residues 176 to 179 are cytoplasmic; sequence KAWT. A helical membrane pass occupies residues 180 to 223; that stretch reads KEEYADLLYTGIHKIFIGFLYKFIIGYAINTYFIMNLPAITHNK. Ile-224 is a topological domain (extracellular). The helical transmembrane segment at 225-256 threads the bilayer; sequence LGNLLYMYGYSMYLFFDFAGYTMFAVGVSYIM. Over 257–266 the chain is Cytoplasmic; the sequence is GIKSPENFNK. An intramembrane segment occupies 267-303; that stretch reads PFISKNIKDFWNRWHMSLSFWFRDYVFMRFVFWMTKK. Topologically, residues 304 to 308 are cytoplasmic; it reads KWIKN. The chain crosses the membrane as a helical span at residues 309 to 328; that stretch reads RMAVSNIGYFLLFMLMGVWH. The active site involves His-328. The Extracellular portion of the chain corresponds to 329 to 333; sequence GLAPQ. A helical membrane pass occupies residues 334-351; it reads YIIYGLYHAVLMTCYNFF. The Cytoplasmic segment spans residues 352–364; sequence EKWNKKYKWLPSN. A helical membrane pass occupies residues 365–387; that stretch reads RWTTILAIVITFHFVCFGFYIFS. At 388 to 395 the chain is on the extracellular side; sequence GKPFHHHH.

The protein belongs to the membrane-bound acyltransferase family.

The protein resides in the cell membrane. Its pathway is cell wall biogenesis; lipoteichoic acid biosynthesis. Functionally, O-acyltransferase that catalyzes D-alanylation of both teichoic acid and lipoteichoic acid (LTA). D-alanylation of LTA plays an important role in modulating the properties of the cell wall in Gram-positive bacteria, influencing the net charge of the cell wall. Catalyzes D-alanylation from DltC carrier protein. This is Teichoic acid D-alanyltransferase from Bacillus subtilis (strain 168).